Here is a 356-residue protein sequence, read N- to C-terminus: DNA polymerase IV (356 aa).

The UmuC domain maps to 6 to 187; that stretch reads IIHIDMDYFF…LDIGDFPGVG (182 aa). Asp10 and Asp105 together coordinate Mg(2+). Glu106 is an active-site residue.

Belongs to the DNA polymerase type-Y family. In terms of assembly, monomer. Mg(2+) serves as cofactor.

Its subcellular location is the cytoplasm. It catalyses the reaction DNA(n) + a 2'-deoxyribonucleoside 5'-triphosphate = DNA(n+1) + diphosphate. Its function is as follows. Poorly processive, error-prone DNA polymerase involved in untargeted mutagenesis. Copies undamaged DNA at stalled replication forks, which arise in vivo from mismatched or misaligned primer ends. These misaligned primers can be extended by PolIV. Exhibits no 3'-5' exonuclease (proofreading) activity. May be involved in translesional synthesis, in conjunction with the beta clamp from PolIII. The sequence is that of DNA polymerase IV from Staphylococcus aureus (strain JH1).